The chain runs to 161 residues: Chorion class B protein L12 (161 aa).

The first 21 residues, 1-21 (MAAKLILFVCATALVAQSVLS), serve as a signal peptide directing secretion. The tract at residues 22 to 52 (IGCGCGGRGYGGLGYGGLGYGGLGGGCGRGF) is left arm. 3 repeat units span residues 30–34 (GYGGL), 35–39 (GYGGL), and 40–44 (GYGGL). The interval 30-44 (GYGGLGYGGLGYGGL) is 3 X 5 AA tandem repeats of G-Y-G-G-L. Positions 53 to 121 (SGGGLPVATA…GNGAVGITRE (69 aa)) are central domain. A right arm (Gly-rich tandem repeats) region spans residues 122 to 161 (GGFGYGAGYGDGYGLGFGGYGGGYGLGNGGYGGCGCGWGY).

Belongs to the chorion protein family.

Its function is as follows. This protein is one of many from the eggshell of the silk moth. The chain is Chorion class B protein L12 from Bombyx mori (Silk moth).